Reading from the N-terminus, the 325-residue chain is uncharacterized protein (325 aa).

A disordered region spans residues 37–85 (EKPTYTPAKPVKKAPSVVQPRRVSRTLRSSESVHTNHGPERVFESPTPA). Ser52 carries the post-translational modification Phosphoserine. Residues 62–71 (TLRSSESVHT) are compositionally biased toward polar residues. The region spanning 153 to 311 (EDEGKKCLIL…IDLIPFLEHL (159 aa)) is the FCP1 homology domain.

This is an uncharacterized protein from Schizosaccharomyces pombe (strain 972 / ATCC 24843) (Fission yeast).